The sequence spans 654 residues: Probable Xaa-Pro aminopeptidase P (654 aa).

Mn(2+) is bound by residues Asp-449, Asp-460, Glu-558, and Glu-572.

This sequence belongs to the peptidase M24B family. Requires Mn(2+) as cofactor.

It carries out the reaction Release of any N-terminal amino acid, including proline, that is linked to proline, even from a dipeptide or tripeptide.. Functionally, catalyzes the removal of a penultimate prolyl residue from the N-termini of peptides. This chain is Probable Xaa-Pro aminopeptidase P (ampp), found in Aspergillus flavus (strain ATCC 200026 / FGSC A1120 / IAM 13836 / NRRL 3357 / JCM 12722 / SRRC 167).